The chain runs to 181 residues: ATP synthase subunit delta (181 aa).

This sequence belongs to the ATPase delta chain family. In terms of assembly, F-type ATPases have 2 components, F(1) - the catalytic core - and F(0) - the membrane proton channel. F(1) has five subunits: alpha(3), beta(3), gamma(1), delta(1), epsilon(1). F(0) has three main subunits: a(1), b(2) and c(10-14). The alpha and beta chains form an alternating ring which encloses part of the gamma chain. F(1) is attached to F(0) by a central stalk formed by the gamma and epsilon chains, while a peripheral stalk is formed by the delta and b chains.

It is found in the cell membrane. Functionally, f(1)F(0) ATP synthase produces ATP from ADP in the presence of a proton or sodium gradient. F-type ATPases consist of two structural domains, F(1) containing the extramembraneous catalytic core and F(0) containing the membrane proton channel, linked together by a central stalk and a peripheral stalk. During catalysis, ATP synthesis in the catalytic domain of F(1) is coupled via a rotary mechanism of the central stalk subunits to proton translocation. In terms of biological role, this protein is part of the stalk that links CF(0) to CF(1). It either transmits conformational changes from CF(0) to CF(1) or is implicated in proton conduction. This is ATP synthase subunit delta from Lactiplantibacillus plantarum (strain ATCC BAA-793 / NCIMB 8826 / WCFS1) (Lactobacillus plantarum).